The sequence spans 215 residues: MOB kinase activator-like 1A (215 aa).

Residues 1-27 are disordered; it reads MSLFGLGRNQKTFRPKKSAPSGSKGAQ. 4 residues coordinate Zn(2+): Cys-79, Cys-84, His-161, and His-166.

Belongs to the MOB1/phocein family. In terms of assembly, interacts with SIK1 at the plasma membrane and in the nucleus. As to expression, constitutively expressed. In 3- to 4-day-old seedlings, expression is high in the shoot apical meristem and along the vasculature in cotyledons, hypocotyls and roots. At the root tip, expression is detected in columella and lateral root cap cells as well as in the stem cell niche around the quiescent center (QC). The levels of expression decrease progressively in the meristematic zone from the root tip towards the base of the root, becoming stronger again in the elongation zone. In flowers, expression appears localized in ovules and pollen.

The protein resides in the nucleus. The protein localises to the cell membrane. Its subcellular location is the vacuole membrane. In terms of biological role, plays a key role in regulation of cell expansion and cell division. Required for proper plant development, the correct patterning of the root meristem and the control of root growth. Involved in both sporogenesis and gametogenesis. The chain is MOB kinase activator-like 1A from Arabidopsis thaliana (Mouse-ear cress).